The primary structure comprises 135 residues: Large ribosomal subunit protein bL17 (135 aa).

The protein belongs to the bacterial ribosomal protein bL17 family. As to quaternary structure, part of the 50S ribosomal subunit. Contacts protein L32.

The chain is Large ribosomal subunit protein bL17 from Listeria monocytogenes serotype 4b (strain CLIP80459).